The chain runs to 297 residues: Ribosomal RNA small subunit methyltransferase H (297 aa).

Residues glycine 35–histidine 37, aspartate 55, phenylalanine 82, aspartate 100, and glutamine 107 contribute to the S-adenosyl-L-methionine site.

Belongs to the methyltransferase superfamily. RsmH family.

The protein resides in the cytoplasm. The enzyme catalyses cytidine(1402) in 16S rRNA + S-adenosyl-L-methionine = N(4)-methylcytidine(1402) in 16S rRNA + S-adenosyl-L-homocysteine + H(+). Functionally, specifically methylates the N4 position of cytidine in position 1402 (C1402) of 16S rRNA. This is Ribosomal RNA small subunit methyltransferase H from Chlamydia caviae (strain ATCC VR-813 / DSM 19441 / 03DC25 / GPIC) (Chlamydophila caviae).